The following is a 663-amino-acid chain: Dual specificity protein phosphatase 8 (663 aa).

A Rhodanese domain is found at 23-138 (GPGGPLVIDS…FSSCFPGLCE (116 aa)). A Tyrosine-protein phosphatase domain is found at 160 to 302 (GLTRILPHLY…LLEYERSLKL (143 aa)). The active-site Phosphocysteine intermediate is the cysteine 246. 2 disordered regions span residues 313–367 (LGTP…STAP) and 404–624 (YAPS…FKRR). Low complexity-rich tracts occupy residues 334 to 353 (STSE…REGS), 427 to 448 (LDSP…PDSV), and 546 to 557 (SAGAPGPGNSSS). Positions 558–577 (SGGGGGGGGGGGGGGGGGGS) are enriched in gly residues. Residues 578-600 (SSSNSSSSSSSSSSSSSSSSSSS) show a composition bias toward low complexity.

This sequence belongs to the protein-tyrosine phosphatase family. Non-receptor class dual specificity subfamily. Monomer. In terms of tissue distribution, expressed predominantly in brain and lung.

Its subcellular location is the cytoplasm. It is found in the nucleus. It catalyses the reaction O-phospho-L-tyrosyl-[protein] + H2O = L-tyrosyl-[protein] + phosphate. The catalysed reaction is O-phospho-L-seryl-[protein] + H2O = L-seryl-[protein] + phosphate. The enzyme catalyses O-phospho-L-threonyl-[protein] + H2O = L-threonyl-[protein] + phosphate. Functionally, has phosphatase activity with synthetic phosphatase substrates and negatively regulates mitogen-activated protein kinase activity, presumably by catalysing their dephosphorylation. Expected to display protein phosphatase activity toward phosphotyrosine, phosphoserine and phosphothreonine residues. This Mus musculus (Mouse) protein is Dual specificity protein phosphatase 8 (Dusp8).